We begin with the raw amino-acid sequence, 473 residues long: Lactate utilization protein B (473 aa).

2 consecutive 4Fe-4S ferredoxin-type domains span residues 302–332 and 351–380; these read GSEF…GHSY and YDDY…LHDL. [4Fe-4S] cluster contacts are provided by Cys311, Cys314, Cys317, Cys321, Cys364, Cys367, and Cys371.

Belongs to the LutB/YkgF family.

Is involved in L-lactate degradation and allows cells to grow with lactate as the sole carbon source. Has probably a role as an electron transporter during oxidation of L-lactate. In Bacillus cytotoxicus (strain DSM 22905 / CIP 110041 / 391-98 / NVH 391-98), this protein is Lactate utilization protein B.